A 1813-amino-acid polypeptide reads, in one-letter code: U3 small nucleolar RNA-associated protein 10 (1813 aa).

HEAT repeat units follow at residues 245 to 283, 389 to 427, 428 to 464, 584 to 621, and 659 to 695; these read DVLI…KASL, SETI…LQFN, ESDT…DIMP, ADMQ…LASK, and IIHH…QDDS. Disordered regions lie at residues 686–705 and 887–912; these read IRGP…STGV and DLGS…SSMD. The segment covering 690 to 705 has biased composition (basic and acidic residues); it reads RSQDDSDRTRSESTGV. HEAT repeat units lie at residues 1058–1095, 1189–1228, 1265–1302, 1309–1347, 1398–1437, 1678–1715, and 1769–1806; these read QTID…AFEH, KIAV…KAHG, LSLV…SSND, ARVL…KYGK, EALP…HVPW, LASI…LAVA, and ALLP…ILGE.

It belongs to the HEATR1/UTP10 family. As to quaternary structure, component of the ribosomal small subunit (SSU) processome.

Its subcellular location is the nucleus. It is found in the nucleolus. In terms of biological role, involved in nucleolar processing of pre-18S ribosomal RNA. Involved in ribosome biosynthesis. In Coccidioides immitis (strain RS) (Valley fever fungus), this protein is U3 small nucleolar RNA-associated protein 10.